The primary structure comprises 511 residues: Sphingosine-1-phosphate transporter MFSD2B (511 aa).

Helical transmembrane passes span methionine 108 to valine 128, valine 136 to proline 156, isoleucine 236 to valine 256, threonine 280 to valine 300, asparagine 323 to leucine 343, leucine 357 to valine 377, valine 379 to valine 399, alanine 415 to isoleucine 435, and leucine 462 to tyrosine 482.

The protein belongs to the major facilitator superfamily.

The protein localises to the cell membrane. It catalyses the reaction sphing-4-enine 1-phosphate(in) = sphing-4-enine 1-phosphate(out). The catalysed reaction is sphinganine 1-phosphate(in) = sphinganine 1-phosphate(out). The enzyme catalyses sphinga-4E,14Z-dienine-1-phosphate(in) = sphinga-4E,14Z-dienine-1-phosphate(out). Functionally, lipid transporter that specifically mediates export of sphingosine-1-phosphate in red blood cells and platelets. Sphingosine-1-phosphate is a signaling sphingolipid and its export from red blood cells into in the plasma is required for red blood cell morphology. Sphingosine-1-phosphate export from platelets is required for platelet aggregation and thrombus formation. In addition to export, also able to mediate S1P import. The sequence is that of Sphingosine-1-phosphate transporter MFSD2B from Xenopus tropicalis (Western clawed frog).